Here is a 463-residue protein sequence, read N- to C-terminus: ATP synthase subunit beta (463 aa).

152-159 (GGAGVGKT) is an ATP binding site.

It belongs to the ATPase alpha/beta chains family. F-type ATPases have 2 components, CF(1) - the catalytic core - and CF(0) - the membrane proton channel. CF(1) has five subunits: alpha(3), beta(3), gamma(1), delta(1), epsilon(1). CF(0) has three main subunits: a(1), b(2) and c(9-12). The alpha and beta chains form an alternating ring which encloses part of the gamma chain. CF(1) is attached to CF(0) by a central stalk formed by the gamma and epsilon chains, while a peripheral stalk is formed by the delta and b chains.

The protein resides in the cell inner membrane. It catalyses the reaction ATP + H2O + 4 H(+)(in) = ADP + phosphate + 5 H(+)(out). Produces ATP from ADP in the presence of a proton gradient across the membrane. The catalytic sites are hosted primarily by the beta subunits. This chain is ATP synthase subunit beta, found in Shewanella oneidensis (strain ATCC 700550 / JCM 31522 / CIP 106686 / LMG 19005 / NCIMB 14063 / MR-1).